Reading from the N-terminus, the 472-residue chain is SURF6 homolog gldi-11 (472 aa).

Disordered stretches follow at residues 53–73 (LSKK…AKGL), 89–232 (KSKQ…SPEI), 249–350 (KVER…DRAL), and 414–472 (LVKK…GRIL). Over residues 95–106 (KVQPQKVVAPVK) the composition is skewed to low complexity. Positions 107–132 (RPADQNKNKEKVVKKDQKKQDKKADS) are enriched in basic and acidic residues. Positions 133–150 (DSEEDDSSDDEEKEETDE) are enriched in acidic residues. The span at 151–160 (PVAKKQKKEE) shows a compositional bias: basic and acidic residues. Acidic residues-rich tracts occupy residues 161 to 175 (SSDD…EEPE) and 182 to 194 (EAED…EEEE). Positions 197-210 (SKPNKTVAQSTLKS) are enriched in polar residues. A compositionally biased stretch (basic and acidic residues) spans 212-221 (GKIDKEIQKL). Over residues 274–285 (LKRRESKLKLKQ) the composition is skewed to basic residues. Residues 286-305 (RRAEEKKGKEAAAQVKKETV) show a composition bias toward basic and acidic residues. Residues 414-426 (LVKKNKMKDRRKQ) show a composition bias toward basic residues. The segment covering 427-443 (KWENRENKTEGEKQTKQ) has biased composition (basic and acidic residues). Over residues 459-472 (KRKMNKLRNKGRIL) the composition is skewed to basic residues.

The protein belongs to the SURF6 family.

The protein resides in the nucleus. It localises to the nucleoplasm. Binds to both DNA and RNA in vitro, with a stronger binding capacity for RNA. May represent a nucleolar constitutive protein involved in ribosomal biosynthesis or assembly. The chain is SURF6 homolog gldi-11 from Caenorhabditis elegans.